The primary structure comprises 138 residues: Large ribosomal subunit protein uL16 (138 aa).

Basic residues predominate over residues 1–16 (MLIPRRVKHRKQHHPS). The segment at 1–25 (MLIPRRVKHRKQHHPSRSGAAKGGT) is disordered.

Belongs to the universal ribosomal protein uL16 family. In terms of assembly, part of the 50S ribosomal subunit.

Its function is as follows. Binds 23S rRNA and is also seen to make contacts with the A and possibly P site tRNAs. This is Large ribosomal subunit protein uL16 from Rhodococcus jostii (strain RHA1).